We begin with the raw amino-acid sequence, 141 residues long: MPGLFAAKKLKKNRQNFKWKDVDYKRKALRLDVKADPLEGAPQARGIVIEKVGIEAKQPNSAIRKCVRVQLIKNGKQLTAFAPGDGAIGFIDEHDEVMIEGIGGPSGRSMGDIPGVRWKVSKVNNVALSEMVSGKIEKPVR.

It belongs to the universal ribosomal protein uS12 family. In terms of assembly, part of the 30S ribosomal subunit.

Its function is as follows. With S4 and S5 plays an important role in translational accuracy. Located at the interface of the 30S and 50S subunits. The chain is Small ribosomal subunit protein uS12 from Methanobrevibacter smithii (strain ATCC 35061 / DSM 861 / OCM 144 / PS).